The sequence spans 935 residues: Potassium channel AKT1 (935 aa).

Residues 1-106 (MARWGAARMA…YDRRYRIWET (106 aa)) lie on the Cytoplasmic side of the membrane. A helical transmembrane segment spans residues 107-127 (FLIVLVVYSAWVSPFEFGFIP). The Extracellular segment spans residues 128–136 (KPTGALATA). Residues 137–157 (DNVVNAFFAVDIILTFFVAYL) traverse the membrane as a helical segment. Topologically, residues 158–178 (DKMSYMLEDDPKKIAWRYSTT) are cytoplasmic. The chain crosses the membrane as a helical span at residues 179 to 199 (WLVLDVASTIPSEFARRILPS). Residues 200–205 (KLRSYG) are Extracellular-facing. Residues 206 to 226 (FFNMLRLWRLRRVSSLFSRLE) form a helical; Voltage-sensor membrane-spanning segment. Over 227–240 (KDRHFNYFWVRCAK) the chain is Cytoplasmic. Residues 241 to 261 (LICVTLFAVHCAACFYYLLAD) form a helical membrane-spanning segment. Topologically, residues 262 to 288 (RYPVPTSTWIGNYMADFHERSLWIRYV) are extracellular. An intramembrane region (pore-forming) is located at residues 289–308 (TSVYWSITTLTTVGYGDLHA). Residues 309 to 312 (ENTR) are Extracellular-facing. The helical transmembrane segment at 313 to 333 (EMIFNIFYMLFNLGLTAYLIG) threads the bilayer. Topologically, residues 334–935 (NMTNLVVHGT…WDAEKMKGKS (602 aa)) are cytoplasmic. An a nucleoside 3',5'-cyclic phosphate-binding site is contributed by 419–538 (LFQGVSNDLI…TIIMNNLIQF (120 aa)). ANK repeat units lie at residues 565–594 (DLPI…DPNE), 598–627 (DGHT…DPNA), 631–660 (EGKV…DLSS), 662–691 (DTGL…DVNR), 695–724 (DGTT…DIDK), and 728–757 (NGWT…ATAS). The segment at 826–854 (SQAQRETDHPLSRGGLAATGSPNPSSGSR) is disordered. The span at 845 to 854 (GSPNPSSGSR) shows a compositional bias: polar residues. The 77-residue stretch at 859–935 (RVTISCPEKG…WDAEKMKGKS (77 aa)) folds into the KHA domain.

This sequence belongs to the potassium channel family. Plant (TC 1.A.1.4) subfamily. As to quaternary structure, the potassium channel is probably a homo- or heterotetrameric complex of pore-forming subunits. Expressed in roots and coleoptile of young seedlings.

It localises to the membrane. In terms of biological role, highly selective inward-rectifying potassium channel that mediates potassium uptake by plant roots. Assuming opened or closed conformations in response to the voltage difference across the membrane, the channel is activated by hyperpolarization. May be a major salt-sensitive potassium channel in roots. In Oryza sativa subsp. japonica (Rice), this protein is Potassium channel AKT1 (AKT1).